We begin with the raw amino-acid sequence, 422 residues long: Gamma-glutamyl phosphate reductase (422 aa).

The protein belongs to the gamma-glutamyl phosphate reductase family.

Its subcellular location is the cytoplasm. The enzyme catalyses L-glutamate 5-semialdehyde + phosphate + NADP(+) = L-glutamyl 5-phosphate + NADPH + H(+). Its pathway is amino-acid biosynthesis; L-proline biosynthesis; L-glutamate 5-semialdehyde from L-glutamate: step 2/2. In terms of biological role, catalyzes the NADPH-dependent reduction of L-glutamate 5-phosphate into L-glutamate 5-semialdehyde and phosphate. The product spontaneously undergoes cyclization to form 1-pyrroline-5-carboxylate. This Shewanella piezotolerans (strain WP3 / JCM 13877) protein is Gamma-glutamyl phosphate reductase.